Here is a 243-residue protein sequence, read N- to C-terminus: uncharacterized protein (243 aa).

The helical transmembrane segment at 55–75 threads the bilayer; it reads IILIILLTIFMVISTLVIAFV.

Its subcellular location is the membrane. This is an uncharacterized protein from Rickettsia prowazekii (strain Madrid E).